Reading from the N-terminus, the 568-residue chain is MSSSSIEDIKGKSHRLRGSLLESLANPTTGALGESDQTLIKYHGSYQQDDRDLREERRRQKLEPAYQFMIRTRTPGGVITPQQWLQLDAIATRYANHSLRVTTRQAFQFHGVIKRELKTTMQAINAALIDTLAACGDVNRNVQVAANPLLSRAHADLYTDAAHLSEHLLPNTRAYYEIWLDEKKVAGAGEEEEPIYGPHYLPRKFKIGFAAPPINDVDVFANDLGFIAVIVDNTLLGYNVTIGGGMGTTHGDPDTWPRVGNIIGFITRADLITISTAIVTTQRDFGNRTLRKRARFKYTIDDRGLDCIVGEIQQRAGITLQPARPFVFEHNGDRYGWIEGEDGHWHLTLSLPAGRIADTEGSTLLSGFREIAQLGIGEFRMTPNQNVVIAGISPGQRAAIDALVTQYGLDTGNRAPTALGRHAMACVALPTCGLAMAEAERYLPDFNAKLQPILEKYGLAEAPILLRISGCPNGCSRPYLAEIALVGKAPGRYNLMLGGDQRGQRLNTLYRENITETEILAALEPLLGRYQQKRLPSEGFGDFLHRTGIIALPPYPTHRHVISSTLQA.

Residues C426, C432, C471, and C475 each contribute to the [4Fe-4S] cluster site. C475 contributes to the siroheme binding site.

Belongs to the nitrite and sulfite reductase 4Fe-4S domain family. Alpha(8)-beta(8). The alpha component is a flavoprotein, the beta component is a hemoprotein. It depends on siroheme as a cofactor. [4Fe-4S] cluster is required as a cofactor.

It carries out the reaction hydrogen sulfide + 3 NADP(+) + 3 H2O = sulfite + 3 NADPH + 4 H(+). It functions in the pathway sulfur metabolism; hydrogen sulfide biosynthesis; hydrogen sulfide from sulfite (NADPH route): step 1/1. Functionally, component of the sulfite reductase complex that catalyzes the 6-electron reduction of sulfite to sulfide. This is one of several activities required for the biosynthesis of L-cysteine from sulfate. The protein is Sulfite reductase [NADPH] hemoprotein beta-component of Xylella fastidiosa (strain M23).